The primary structure comprises 278 residues: Undecaprenyl-diphosphatase 1 (278 aa).

The next 5 helical transmembrane spans lie at 85 to 105 (LNVIIATIPAIVLGLLFEKTI), 108 to 128 (ALFSPVPVAFALVAGGVVILW), 188 to 208 (VATEFSFFLAIPIIFGATAYE), 218 to 238 (VDALGTFALGFVAAFVSAFAC), and 254 to 274 (FAWYRIGFGLLILLVGYSGAL).

The protein belongs to the UppP family.

The protein localises to the cell inner membrane. The catalysed reaction is di-trans,octa-cis-undecaprenyl diphosphate + H2O = di-trans,octa-cis-undecaprenyl phosphate + phosphate + H(+). Catalyzes the dephosphorylation of undecaprenyl diphosphate (UPP). Confers resistance to bacitracin. The protein is Undecaprenyl-diphosphatase 1 of Paraburkholderia xenovorans (strain LB400).